The sequence spans 432 residues: Elongation factor 1-gamma (432 aa).

Residues 1 to 82 enclose the GST N-terminal domain; that stretch reads LYTYPENWRA…YVSNEELRGS (82 aa). The region spanning 83 to 211 is the GST C-terminal domain; that stretch reads TPEAAAQVVQ…VKLCEKMAQF (129 aa). Residues Lys-142 and Lys-207 each carry the N6-acetyllysine modification. Over residues 216-249 the composition is skewed to basic and acidic residues; the sequence is FAESQPKKDTPRKEKGSREEKQKPQAERKEEKKA. The tract at residues 216-258 is disordered; the sequence is FAESQPKKDTPRKEKGSREEKQKPQAERKEEKKAAAPAPEEEL. A Glycyl lysine isopeptide (Lys-Gly) (interchain with G-Cter in SUMO1) cross-link involves residue Lys-248. Residues 271 to 432 enclose the EF-1-gamma C-terminal domain; sequence AKDPFAHLPK…KAFNQGKIFK (162 aa). Residue Lys-280 forms a Glycyl lysine isopeptide (Lys-Gly) (interchain with G-Cter in SUMO2) linkage. N6-acetyllysine is present on Lys-396. An N6-acetyllysine; alternate modification is found at Lys-429. The residue at position 429 (Lys-429) is an N6-malonyllysine; alternate.

As to quaternary structure, EF-1 is composed of four subunits: alpha, beta, delta, and gamma.

Its function is as follows. Probably plays a role in anchoring the complex to other cellular components. The chain is Elongation factor 1-gamma (EEF1G) from Sus scrofa (Pig).